The following is a 38-amino-acid chain: Large ribosomal subunit protein bL36 (38 aa).

It belongs to the bacterial ribosomal protein bL36 family.

This Mycoplasma mobile (strain ATCC 43663 / 163K / NCTC 11711) (Mesomycoplasma mobile) protein is Large ribosomal subunit protein bL36.